A 289-amino-acid chain; its full sequence is Kinetochore-associated protein MTW1 (289 aa).

The stretch at arginine 105–arginine 147 forms a coiled coil.

It belongs to the mis12 family. Component of the MIND kinetochore complex, which is composed of at least MTW1, NNF1, NSL1 and DSN1.

The protein resides in the chromosome. Its subcellular location is the centromere. It localises to the kinetochore. It is found in the cytoplasm. The protein localises to the cytoskeleton. The protein resides in the spindle pole. Its function is as follows. Acts as an essential component of the kinetochore MIND complex, which is required for the spindle checkpoint and kinetochore integrity. MIND plays a role in establishing a bipolar spindle-kinetochore interaction by joining kinetochore subunits contacting DNA to those contacting microtubules. In Saccharomyces cerevisiae (strain ATCC 204508 / S288c) (Baker's yeast), this protein is Kinetochore-associated protein MTW1 (MTW1).